The sequence spans 344 residues: Serpentine receptor class H-72 (344 aa).

Helical transmembrane passes span 30-50 (GLAF…FFTG), 66-86 (LSLV…SFFI), 110-132 (TVVQ…TLLF), 155-175 (WLAG…FNLA), 221-241 (SIYM…LVIV), 259-279 (YGLI…SVLI), and 292-312 (LVSI…LLVH).

The protein belongs to the nematode receptor-like protein srh family.

It is found in the membrane. The protein is Serpentine receptor class H-72 (srh-72) of Caenorhabditis elegans.